Consider the following 673-residue polypeptide: DNA ligase (673 aa).

NAD(+) is bound by residues 35 to 39 (DAEYD), 84 to 85 (SL), and Glu115. Catalysis depends on Lys117, which acts as the N6-AMP-lysine intermediate. 4 residues coordinate NAD(+): Arg138, Glu175, Lys292, and Lys316. The Zn(2+) site is built by Cys410, Cys413, Cys428, and Cys434. Residues 592–673 (PRKLPLQGLV…FLDLLERGRP (82 aa)) form the BRCT domain.

The protein belongs to the NAD-dependent DNA ligase family. LigA subfamily. The cofactor is Mg(2+). Mn(2+) is required as a cofactor.

The catalysed reaction is NAD(+) + (deoxyribonucleotide)n-3'-hydroxyl + 5'-phospho-(deoxyribonucleotide)m = (deoxyribonucleotide)n+m + AMP + beta-nicotinamide D-nucleotide.. Its function is as follows. DNA ligase that catalyzes the formation of phosphodiester linkages between 5'-phosphoryl and 3'-hydroxyl groups in double-stranded DNA using NAD as a coenzyme and as the energy source for the reaction. It is essential for DNA replication and repair of damaged DNA. This chain is DNA ligase, found in Methylococcus capsulatus (strain ATCC 33009 / NCIMB 11132 / Bath).